The following is a 142-amino-acid chain: Dynein light chain Tctex-type protein 2B (142 aa).

It belongs to the dynein light chain Tctex-type family. As to quaternary structure, light chain of the cytoplasmic dynein complex 2, a multisubunit complex composed at least of eleven different proteins. The cytoplasmic dynein 2 complex consists of two catalytic heavy chains (HCs) and a number of non-catalytic subunits presented by intermediate chains (ICs), light intermediate chains (LICs) and light chains (LCs). Among them, a heavy chain (DYNC2H1), two intermediate chains (DYNC2I2 and DYNC2I1), a light intermediate chain (DYNC2LI1), and a light chain (DYNLT2B) are unique to the dynein-2 complex, but a subset of the light chains are also shared by dynein-1 and dynein-2 complexes. Interacts with DYNC2I1. The dimer DYNLT2B-DYNLT1/DYNLT3 interacts with DYNC2I1; this interaction is crucial for retrograde trafficking of ciliary proteins.

The protein localises to the dynein axonemal particle. Its function is as follows. Acts as one of several non-catalytic accessory components of the cytoplasmic dynein 2 complex (dynein-2 complex), a motor protein complex that drives the movement of cargos along microtubules within cilia and flagella in concert with the intraflagellar transport (IFT) system. Required for proper retrograde ciliary transport. This chain is Dynein light chain Tctex-type protein 2B, found in Homo sapiens (Human).